The primary structure comprises 405 residues: Argininosuccinate synthase (405 aa).

ATP is bound by residues 10–18 (AYSGGLDTS) and Ala-37. Residues Tyr-88 and Ser-93 each coordinate L-citrulline. Gly-118 serves as a coordination point for ATP. 3 residues coordinate L-aspartate: Thr-120, Asn-124, and Asp-125. Asn-124 is an L-citrulline binding site. L-citrulline contacts are provided by Arg-128, Ser-179, Ser-188, Glu-264, and Tyr-276.

Belongs to the argininosuccinate synthase family. Type 1 subfamily. In terms of assembly, homotetramer.

The protein localises to the cytoplasm. The catalysed reaction is L-citrulline + L-aspartate + ATP = 2-(N(omega)-L-arginino)succinate + AMP + diphosphate + H(+). It functions in the pathway amino-acid biosynthesis; L-arginine biosynthesis; L-arginine from L-ornithine and carbamoyl phosphate: step 2/3. The protein is Argininosuccinate synthase of Pseudomonas putida (strain GB-1).